A 424-amino-acid chain; its full sequence is Probable serine/threonine-protein kinase PBL6 (424 aa).

The tract at residues 1–26 (MGCFGRTPKSNKRSDTKTTKNNDFTP) is disordered. Gly-2 carries the N-myristoyl glycine lipid modification. Cys-3 carries S-palmitoyl cysteine lipidation. A Phosphothreonine modification is found at Thr-87. A Protein kinase domain is found at 98-377 (FKSDCFLGEG…VVMALDHLAS (280 aa)). Residues 104 to 112 (LGEGGFGKV) and Lys-127 contribute to the ATP site. Tyr-172 is modified (phosphotyrosine). Asp-225 serves as the catalytic Proton acceptor. Residues Ser-229 and Ser-259 each carry the phosphoserine modification. Thr-260 and Thr-265 each carry phosphothreonine. Residue Tyr-273 is modified to Phosphotyrosine.

It belongs to the protein kinase superfamily. Ser/Thr protein kinase family.

The protein localises to the cell membrane. The enzyme catalyses L-seryl-[protein] + ATP = O-phospho-L-seryl-[protein] + ADP + H(+). It catalyses the reaction L-threonyl-[protein] + ATP = O-phospho-L-threonyl-[protein] + ADP + H(+). Functionally, may be involved in plant defense signaling. This Arabidopsis thaliana (Mouse-ear cress) protein is Probable serine/threonine-protein kinase PBL6.